The following is a 310-amino-acid chain: Probable cell division protein WhiA (310 aa).

Residues 277–310 constitute a DNA-binding region (H-T-H motif); that stretch reads SLKELAEQVPDGPISKSGVNHRLKKLHEIAENLR.

It belongs to the WhiA family.

Its function is as follows. Involved in cell division and chromosome segregation. This chain is Probable cell division protein WhiA, found in Lactobacillus delbrueckii subsp. bulgaricus (strain ATCC 11842 / DSM 20081 / BCRC 10696 / JCM 1002 / NBRC 13953 / NCIMB 11778 / NCTC 12712 / WDCM 00102 / Lb 14).